Reading from the N-terminus, the 251-residue chain is Hydroxyacylglutathione hydrolase (251 aa).

Zn(2+)-binding residues include H53, H55, D57, H58, H110, D127, and H165.

The protein belongs to the metallo-beta-lactamase superfamily. Glyoxalase II family. Monomer. The cofactor is Zn(2+).

It carries out the reaction an S-(2-hydroxyacyl)glutathione + H2O = a 2-hydroxy carboxylate + glutathione + H(+). The protein operates within secondary metabolite metabolism; methylglyoxal degradation; (R)-lactate from methylglyoxal: step 2/2. In terms of biological role, thiolesterase that catalyzes the hydrolysis of S-D-lactoyl-glutathione to form glutathione and D-lactic acid. The polypeptide is Hydroxyacylglutathione hydrolase (Edwardsiella ictaluri (strain 93-146)).